We begin with the raw amino-acid sequence, 447 residues long: MDMGNQHPSISRLQEIQKEVKSVEQQVIGFSGLSDDKNYKKLERILTKQLFEIDSVDTEGKGDIQQARKRAAQETERLLKELEQNANHPHRIEIQNIFEEAQSLVREKIVPFYNGGNCVTDEFEEGIQDIILRLTHVKTGGKISLRKARYHTLTKICAVQEIIEDCMKKQPSLPLSEDAHPSVAKINFVMCEVNKARGVLIALLMGVNNNETCRHLSCVLSGLIADLDALDVCGRTEIRNYRREVVEDINKLLKYLDLEEEADTTKAFDLRQNHSILKIEKVLKRMREIKNELLQAQNPSELYLSSKTELQGLIGQLDEVSLEKNPCIREARRRAVIEVQTLITYIDLKEALEKRKLFACEEHPSHKAVWNVLGNLSEIQGEVLSFDGNRTDKNYIRLEELLTKQLLALDAVDPQGEEKCKAARKQAVRLAQNILSYLDLKSDEWEY.

BAG domains follow at residues 9–86 (SISR…EQNA), 95–167 (QNIF…EDCM), 182–260 (SVAK…DLEE), 275–350 (SILK…DLKE), and 365–442 (SHKA…DLKS).

Binds to the ATPase domain of HSP/HSP70 chaperones. Binds PRKN. Interacts with HSPA8 and JPH2. As to expression, expressed in the heart.

Co-chaperone for HSP/HSP70 proteins. It functions as a nucleotide-exchange factor promoting the release of ADP from HSP70, thereby activating HSP70-mediated protein refolding. Has an essential role in maintaining proteostasis at junctional membrane complexes (JMC), where it may function as a scaffold between the HSPA8 chaperone and JMC proteins enabling correct, HSPA8-dependent JMC protein folding. Inhibits both auto-ubiquitination of PRKN and ubiquitination of target proteins by PRKN. This Homo sapiens (Human) protein is BAG family molecular chaperone regulator 5 (BAG5).